The chain runs to 144 residues: Large ribosomal subunit protein uL15 (144 aa).

The tract at residues 1-48 (MRLNTLSPAAGSKSAAKRVGRGIGSGTGKTCGRGHKGQKSRSGGGVRI) is disordered. The segment covering 21–31 (RGIGSGTGKTC) has biased composition (gly residues).

The protein belongs to the universal ribosomal protein uL15 family. As to quaternary structure, part of the 50S ribosomal subunit.

Its function is as follows. Binds to the 23S rRNA. The sequence is that of Large ribosomal subunit protein uL15 from Shewanella woodyi (strain ATCC 51908 / MS32).